Reading from the N-terminus, the 414-residue chain is Esterase FrsA (414 aa).

This sequence belongs to the FrsA family.

It carries out the reaction a carboxylic ester + H2O = an alcohol + a carboxylate + H(+). In terms of biological role, catalyzes the hydrolysis of esters. In Escherichia coli O8 (strain IAI1), this protein is Esterase FrsA.